Consider the following 215-residue polypeptide: Cytochrome b6 (215 aa).

A helical transmembrane segment spans residues 32 to 52 (IFYCLGGITLTCFLVQVATGF). Cys35 serves as a coordination point for heme c. Heme b contacts are provided by His86 and His100. 3 helical membrane-spanning segments follow: residues 90 to 110 (ASMM…TGGF), 116 to 136 (LTWV…VTGY), and 186 to 206 (LHTF…FLMI). His187 and His202 together coordinate heme b.

The protein belongs to the cytochrome b family. PetB subfamily. The 4 large subunits of the cytochrome b6-f complex are cytochrome b6, subunit IV (17 kDa polypeptide, PetD), cytochrome f and the Rieske protein, while the 4 small subunits are PetG, PetL, PetM and PetN. The complex functions as a dimer. Heme b is required as a cofactor. It depends on heme c as a cofactor.

It localises to the plastid. The protein localises to the chloroplast thylakoid membrane. Functionally, component of the cytochrome b6-f complex, which mediates electron transfer between photosystem II (PSII) and photosystem I (PSI), cyclic electron flow around PSI, and state transitions. The polypeptide is Cytochrome b6 (Nicotiana tabacum (Common tobacco)).